The primary structure comprises 765 residues: MSGDHLHNDSQIEADFRLNDSHKHKDKHKDREHRHKEHKKEKDREKSKHSNSEHKDSEKKHKEKEKTKHKDGSSEKHKDKHKDRDKEKRKEEKVRASGDAKIKKEKENGFSSPPQIKDEPEDDGYFVPPKEDIKPLKRPRDEDDADYKPKKIKTEDTKKEKKRKLEEEEDGKLKKPKNKDKDKKVPEPDNKKKKPKKEEEQKWKWWEEERYPEGIKWKFLEHKGPVFAPPYEPLPENVKFYYDGKVMKLSPKAEEVATFFAKMLDHEYTTKEIFRKNFFKDWRKEMTNEEKNIITNLSKCDFTQMSQYFKAQTEARKQMSKEEKLKIKEENEKLLKEYGFCIMDNHKERIANFKIEPPGLFRGRGNHPKMGMLKRRIMPEDIIINCSKDAKVPSPPPGHKWKEVRHDNKVTWLVSWTENIQGSIKYIMLNPSSRIKGEKDWQKYETARRLKKCVDKIRNQYREDWKSKEMKVRQRAVALYFIDKLALRAGNEKEEGETADTVGCCSLRVEHINLHPELDGQEYVVEFDFLGKDSIRYYNKVPVEKRVFKNLQLFMENKQPEDDLFDRLNTGILNKHLQDLMEGLTAKVFRTYNASITLQQQLKELTAPDENIPAKILSYNRANRAVAILCNHQRAPPKTFEKSMMNLQTKIDAKKEQLADARRDLKSAKADAKVMKDAKTKKVVESKKKAVQRLEEQLMKLEVQATDREENKQIALGTSKLNYLDPRITVAWCKKWGVPIEKIYNKTQREKFAWAIDMADEDYEF.

The span at 1–23 shows a compositional bias: basic and acidic residues; the sequence is MSGDHLHNDSQIEADFRLNDSHK. The disordered stretch occupies residues 1–199; that stretch reads MSGDHLHNDS…NKKKKPKKEE (199 aa). The residue at position 2 (Ser-2) is an N-acetylserine. A phosphoserine mark is found at Ser-2 and Ser-10. The segment covering 24-39 has biased composition (basic residues); that stretch reads HKDKHKDREHRHKEHK. The span at 40–108 shows a compositional bias: basic and acidic residues; that stretch reads KEKDREKSKH…DAKIKKEKEN (69 aa). Ser-57 carries the phosphoserine modification. A Glycyl lysine isopeptide (Lys-Gly) (interchain with G-Cter in SUMO2) cross-link involves residue Lys-101. A Glycyl lysine isopeptide (Lys-Gly) (interchain with G-Cter in SUMO); alternate cross-link involves residue Lys-103. Lys-103 is covalently cross-linked (Glycyl lysine isopeptide (Lys-Gly) (interchain with G-Cter in SUMO2); alternate). Ser-112 is modified (phosphoserine). A Glycyl lysine isopeptide (Lys-Gly) (interchain with G-Cter in SUMO); alternate cross-link involves residue Lys-117. Lys-117 participates in a covalent cross-link: Glycyl lysine isopeptide (Lys-Gly) (interchain with G-Cter in SUMO2); alternate. Residue Lys-117 forms a Glycyl lysine isopeptide (Lys-Gly) (interchain with G-Cter in SUMO1); alternate linkage. The segment covering 129-166 has biased composition (basic and acidic residues); it reads PKEDIKPLKRPRDEDDADYKPKKIKTEDTKKEKKRKLE. Glycyl lysine isopeptide (Lys-Gly) (interchain with G-Cter in SUMO2) cross-links involve residues Lys-134 and Lys-148. Residue Lys-153 forms a Glycyl lysine isopeptide (Lys-Gly) (interchain with G-Cter in SUMO); alternate linkage. Lys-153 participates in a covalent cross-link: Glycyl lysine isopeptide (Lys-Gly) (interchain with G-Cter in SUMO2); alternate. Residues Lys-158 and Lys-164 each participate in a glycyl lysine isopeptide (Lys-Gly) (interchain with G-Cter in SUMO2) cross-link. Lys-172 participates in a covalent cross-link: Glycyl lysine isopeptide (Lys-Gly) (interchain with G-Cter in SUMO2); alternate. N6-acetyllysine; alternate is present on Lys-172. Residues 179 to 199 are compositionally biased toward basic and acidic residues; the sequence is KDKDKKVPEPDNKKKKPKKEE. Lys-204 is covalently cross-linked (Glycyl lysine isopeptide (Lys-Gly) (interchain with G-Cter in SUMO2)). Lys-280 bears the N6-acetyllysine mark. Lys-336 is covalently cross-linked (Glycyl lysine isopeptide (Lys-Gly) (interchain with G-Cter in SUMO2)). Interaction with DNA stretches follow at residues 425–426 and 488–493; these read KY and RAGNEK. The 334-residue stretch at 432–765 folds into the Topo IB-type catalytic domain; the sequence is SSRIKGEKDW…IDMADEDYEF (334 aa). Position 506 is a phosphoserine; by CK2 (Ser-506). A Glycyl lysine isopeptide (Lys-Gly) (interchain with G-Cter in SUMO2) cross-link involves residue Lys-549. Residues 585 to 587 are interaction with DNA; the sequence is TAK. Glycyl lysine isopeptide (Lys-Gly) (interchain with G-Cter in SUMO2) cross-links involve residues Lys-642, Lys-700, and Lys-712. The O-(3'-phospho-DNA)-tyrosine intermediate role is filled by Tyr-723.

The protein belongs to the type IB topoisomerase family. In terms of assembly, monomer. Interacts with ERCC6. Interacts with TPRN; TPRN interacts with a number of DNA damage response proteins, is recruited to sites of DNA damage and may play a role in DNA damage repair. As to quaternary structure, (Microbial infection) Interacts with SV40 Large T antigen; this interactions allows viral DNA replication. In terms of processing, sumoylated. Lys-117 is the main site of sumoylation. Sumoylation plays a role in partitioning TOP1 between nucleoli and nucleoplasm. Levels are dramatically increased on camptothecin (CPT) treatment. Phosphorylation at Ser-506 by CK2 increases binding to supercoiled DNA and sensitivity to camptothecin. Endothelial cells.

It localises to the nucleus. It is found in the nucleolus. Its subcellular location is the nucleoplasm. It carries out the reaction ATP-independent breakage of single-stranded DNA, followed by passage and rejoining.. With respect to regulation, specifically inhibited by camptothecin (CPT), a plant alkaloid with antitumor activity. Its function is as follows. Releases the supercoiling and torsional tension of DNA introduced during the DNA replication and transcription by transiently cleaving and rejoining one strand of the DNA duplex. Introduces a single-strand break via transesterification at a target site in duplex DNA. The scissile phosphodiester is attacked by the catalytic tyrosine of the enzyme, resulting in the formation of a DNA-(3'-phosphotyrosyl)-enzyme intermediate and the expulsion of a 5'-OH DNA strand. The free DNA strand then rotates around the intact phosphodiester bond on the opposing strand, thus removing DNA supercoils. Finally, in the religation step, the DNA 5'-OH attacks the covalent intermediate to expel the active-site tyrosine and restore the DNA phosphodiester backbone. Regulates the alternative splicing of tissue factor (F3) pre-mRNA in endothelial cells. Involved in the circadian transcription of the core circadian clock component BMAL1 by altering the chromatin structure around the ROR response elements (ROREs) on the BMAL1 promoter. In Homo sapiens (Human), this protein is DNA topoisomerase 1 (TOP1).